The chain runs to 200 residues: Charged multivesicular body protein 6 (200 aa).

Residue Gly2 is the site of N-myristoyl glycine attachment. Positions Gln10–Ala145 form a coiled coil. Ser119 bears the Phosphoserine mark. The residue at position 130 (Thr130) is a Phosphothreonine. A Type-2 MIT-interacting motif motif is present at residues Met168–Pro179. Residues Met168–Ser200 are disordered.

The protein belongs to the SNF7 family. As to quaternary structure, probable core component of the endosomal sorting required for transport complex III (ESCRT-III). ESCRT-III components are thought to multimerize to form a flat lattice on the perimeter membrane of the endosome. Several assembly forms of ESCRT-III may exist that interact and act sequentially. Interacts with VPS4A; the interaction is direct. Interacts with VPS4B; the interaction is direct. Interacts with CHMP4A, CHMP4B and CHMP4C. Interacts with SNF8, VPS25 and VPS36. ISGylated in a CHMP5-dependent manner. Isgylation weakens its interaction with VPS4A.

Its subcellular location is the endomembrane system. The protein resides in the endosome membrane. It localises to the late endosome membrane. It is found in the membrane. In terms of biological role, probable core component of the endosomal sorting required for transport complex III (ESCRT-III) which is involved in multivesicular bodies (MVBs) formation and sorting of endosomal cargo proteins into MVBs. MVBs contain intraluminal vesicles (ILVs) that are generated by invagination and scission from the limiting membrane of the endosome and mostly are delivered to lysosomes enabling degradation of membrane proteins, such as stimulated growth factor receptors, lysosomal enzymes and lipids. The MVB pathway appears to require the sequential function of ESCRT-O, -I,-II and -III complexes. ESCRT-III proteins mostly dissociate from the invaginating membrane before the ILV is released. The ESCRT machinery also functions in topologically equivalent membrane fission events, such as the terminal stages of cytokinesis. ESCRT-III proteins are believed to mediate the necessary vesicle extrusion and/or membrane fission activities, possibly in conjunction with the AAA ATPase VPS4. In the ESCRT-III complex, it probably serves as an acceptor for the ESCRT-II complex on endosomal membranes. This chain is Charged multivesicular body protein 6 (Chmp6), found in Mus musculus (Mouse).